A 760-amino-acid polypeptide reads, in one-letter code: Catecholate siderophore receptor Fiu (760 aa).

The signal sequence occupies residues 1 to 31; the sequence is MENNRNFPARQFHSLTFFAGLCIGITPVAQA. The TBDR plug domain occupies 67–175; sequence PVADTTRTMT…PTGSINMISK (109 aa). The TBDR beta-barrel domain occupies 180 to 760; that stretch reads DSGIDASASI…TFLLTANMHF (581 aa). Residues 743–760 carry the TonB C-terminal box motif; it reads RYHPGEPRTFLLTANMHF.

It belongs to the TonB-dependent receptor family.

It localises to the cell outer membrane. In terms of biological role, involved in the active transport across the outer membrane of iron complexed with catecholate siderophores such as dihydroxybenzoylserine and dihydroxybenzoate. It derives its energy for transport by interacting with the trans-periplasmic membrane protein TonB. Can also transport catechol-substituted cephalosporins. Receptor for microcins M, H47 and E492. The sequence is that of Catecholate siderophore receptor Fiu (fiu) from Escherichia coli (strain UTI89 / UPEC).